A 146-amino-acid chain; its full sequence is Antiholin-like protein LrgA (146 aa).

4 helical membrane-spanning segments follow: residues 7-29 (YGFL…IAAI), 34-53 (IPAS…LKVI), 65-87 (LTSL…LGVM), and 97-119 (VILL…ILSL).

It belongs to the CidA/LrgA family. LrgA subfamily.

It is found in the cell membrane. Its function is as follows. Inhibits the expression or activity of extracellular murein hydrolases by interacting, possibly with LrgB, with the holin-like protein CidA. The LrgAB and CidA proteins may affect the proton motive force of the membrane. May be involved in programmed cell death (PCD), possibly triggering PCD in response to antibiotics and environmental stresses. This Bacillus subtilis (strain 168) protein is Antiholin-like protein LrgA.